The chain runs to 172 residues: Shikimate kinase (172 aa).

11–16 contributes to the ATP binding site; it reads GAGKST. Serine 15 provides a ligand contact to Mg(2+). 3 residues coordinate substrate: aspartate 33, arginine 57, and glycine 79. Arginine 117 provides a ligand contact to ATP. Arginine 136 contacts substrate. An ATP-binding site is contributed by arginine 153.

It belongs to the shikimate kinase family. As to quaternary structure, monomer. Mg(2+) is required as a cofactor.

It is found in the cytoplasm. The catalysed reaction is shikimate + ATP = 3-phosphoshikimate + ADP + H(+). Its pathway is metabolic intermediate biosynthesis; chorismate biosynthesis; chorismate from D-erythrose 4-phosphate and phosphoenolpyruvate: step 5/7. Functionally, catalyzes the specific phosphorylation of the 3-hydroxyl group of shikimic acid using ATP as a cosubstrate. In Pseudomonas aeruginosa (strain LESB58), this protein is Shikimate kinase.